The chain runs to 304 residues: UDP-N-acetylenolpyruvoylglucosamine reductase (304 aa).

Residues 34 to 198 (IGGKADFLVW…LEVVFALQPG (165 aa)) form the FAD-binding PCMH-type domain. Arg177 is an active-site residue. Ser227 functions as the Proton donor in the catalytic mechanism. Residue Glu297 is part of the active site.

Belongs to the MurB family. It depends on FAD as a cofactor.

It localises to the cytoplasm. It carries out the reaction UDP-N-acetyl-alpha-D-muramate + NADP(+) = UDP-N-acetyl-3-O-(1-carboxyvinyl)-alpha-D-glucosamine + NADPH + H(+). It functions in the pathway cell wall biogenesis; peptidoglycan biosynthesis. Its function is as follows. Cell wall formation. This is UDP-N-acetylenolpyruvoylglucosamine reductase from Geobacillus thermodenitrificans (strain NG80-2).